The sequence spans 168 residues: Small ribosomal subunit protein uS5 (168 aa).

The S5 DRBM domain maps to 13–76 (LEENVVAINR…EDAKRKLITV (64 aa)).

It belongs to the universal ribosomal protein uS5 family. Part of the 30S ribosomal subunit. Contacts proteins S4 and S8.

Functionally, with S4 and S12 plays an important role in translational accuracy. Located at the back of the 30S subunit body where it stabilizes the conformation of the head with respect to the body. The chain is Small ribosomal subunit protein uS5 from Leuconostoc mesenteroides subsp. mesenteroides (strain ATCC 8293 / DSM 20343 / BCRC 11652 / CCM 1803 / JCM 6124 / NCDO 523 / NBRC 100496 / NCIMB 8023 / NCTC 12954 / NRRL B-1118 / 37Y).